A 467-amino-acid polypeptide reads, in one-letter code: UPF0236 protein TTE0033/TTE0744/TTE0838/TTE0852/TTE1082/TTE1247/TTE1519/TTE1678/TTE1739/TTE1823/TTE2212 (467 aa).

It belongs to the UPF0236 family.

In Caldanaerobacter subterraneus subsp. tengcongensis (strain DSM 15242 / JCM 11007 / NBRC 100824 / MB4) (Thermoanaerobacter tengcongensis), this protein is UPF0236 protein TTE0033/TTE0744/TTE0838/TTE0852/TTE1082/TTE1247/TTE1519/TTE1678/TTE1739/TTE1823/TTE2212.